The chain runs to 668 residues: Penicillin-binding protein 3 (668 aa).

The helical transmembrane segment at 7–23 threads the bilayer; it reads LLVFLCVGLIGLIGCSK. Ser410 acts as the Acyl-ester intermediate in catalysis.

It belongs to the transpeptidase family.

Its subcellular location is the cell membrane. It localises to the forespore inner membrane. The protein resides in the forespore outer membrane. It is found in the membrane raft. The enzyme catalyses Preferential cleavage: (Ac)2-L-Lys-D-Ala-|-D-Ala. Also transpeptidation of peptidyl-alanyl moieties that are N-acyl substituents of D-alanine.. Its pathway is cell wall biogenesis; peptidoglycan biosynthesis. Functionally, penicillin-binding proteins (PBPs) function in the late steps of murein biosynthesis. Probably required for both cortical and vegetative peptidoglycan synthesis. Although not usually required for cell division, in the absence of PBP 2B (pbpB) it becomes essential. Confers resistance to oxacillin and cephalexin. This is Penicillin-binding protein 3 from Bacillus subtilis (strain 168).